The chain runs to 465 residues: MESLRIYNTLARDKQVFVPRQPGEVRMYVCGITVYDYCHVGHARMLVVFDLVQRWLRAIGYRVTYVRNITDVDDKIIRRAVENGESIKSLTDRFIGAMHDDEAALGIQRPDIEPRATQFIPQMLGMIEQLEANGYAYQASDGDVNYSVRKFANYGKLSGKSLDDLRAGERVAANDAKEDPLDFVLWKRAKAEDPEGASWASKYGMGRPGWHIECSAMGCTLLGEHFDIHGGGQDLQFPHHENEIAQSEGATGQTFVNYWMHNGFVQVDNEKMSKSLGNFFTIREVLERYDAEVMRFFIVRTHYRSPLNYSDVHLDDARASLTRLYTALKDVEPDALALDWNEPYAQRFAAAMNDDINTPVAVATLFELAGEVNRTRDASLARQLKQLAGLLGLLGREPRAFLQQGAGSAHAGALAADEIEARIAARVAAKQAKDYAEADRIRAELLEAGIALEDKPGGSTEWRRV.

Zn(2+) is bound at residue Cys-30. A 'HIGH' region motif is present at residues 32-42 (ITVYDYCHVGH). 3 residues coordinate Zn(2+): Cys-214, His-239, and Glu-243. The 'KMSKS' region motif lies at 271–275 (KMSKS). Lys-274 lines the ATP pocket.

It belongs to the class-I aminoacyl-tRNA synthetase family. As to quaternary structure, monomer. Zn(2+) serves as cofactor.

The protein localises to the cytoplasm. The enzyme catalyses tRNA(Cys) + L-cysteine + ATP = L-cysteinyl-tRNA(Cys) + AMP + diphosphate. In Burkholderia vietnamiensis (strain G4 / LMG 22486) (Burkholderia cepacia (strain R1808)), this protein is Cysteine--tRNA ligase.